Consider the following 98-residue polypeptide: Large ribosomal subunit protein uL23 (98 aa).

The protein belongs to the universal ribosomal protein uL23 family. Part of the 50S ribosomal subunit. Contacts protein L29, and trigger factor when it is bound to the ribosome.

Functionally, one of the early assembly proteins it binds 23S rRNA. One of the proteins that surrounds the polypeptide exit tunnel on the outside of the ribosome. Forms the main docking site for trigger factor binding to the ribosome. The polypeptide is Large ribosomal subunit protein uL23 (Gluconacetobacter diazotrophicus (strain ATCC 49037 / DSM 5601 / CCUG 37298 / CIP 103539 / LMG 7603 / PAl5)).